We begin with the raw amino-acid sequence, 307 residues long: Elongation factor Ts (307 aa).

Positions 80–83 are involved in Mg(2+) ion dislocation from EF-Tu; that stretch reads TDFV.

This sequence belongs to the EF-Ts family.

The protein localises to the cytoplasm. In terms of biological role, associates with the EF-Tu.GDP complex and induces the exchange of GDP to GTP. It remains bound to the aminoacyl-tRNA.EF-Tu.GTP complex up to the GTP hydrolysis stage on the ribosome. This chain is Elongation factor Ts (tsf), found in Zymomonas mobilis subsp. mobilis (strain ATCC 31821 / ZM4 / CP4).